The following is a 292-amino-acid chain: Porphobilinogen deaminase (292 aa).

S-(dipyrrolylmethanemethyl)cysteine is present on Cys-236.

The protein belongs to the HMBS family. In terms of assembly, monomer. It depends on dipyrromethane as a cofactor.

It carries out the reaction 4 porphobilinogen + H2O = hydroxymethylbilane + 4 NH4(+). Its pathway is porphyrin-containing compound metabolism; protoporphyrin-IX biosynthesis; coproporphyrinogen-III from 5-aminolevulinate: step 2/4. Functionally, tetrapolymerization of the monopyrrole PBG into the hydroxymethylbilane pre-uroporphyrinogen in several discrete steps. The polypeptide is Porphobilinogen deaminase (Wolbachia sp. subsp. Drosophila simulans (strain wRi)).